A 262-amino-acid chain; its full sequence is Putative hydroxypyruvate isomerase (262 aa).

Active-site proton donor/acceptor residues include Glu-146 and Glu-244.

The protein belongs to the hyi family.

It catalyses the reaction 3-hydroxypyruvate = 2-hydroxy-3-oxopropanoate. Functionally, catalyzes the reversible isomerization between hydroxypyruvate and 2-hydroxy-3-oxopropanoate (also termed tartronate semialdehyde). The protein is Putative hydroxypyruvate isomerase of Caenorhabditis elegans.